The following is a 472-amino-acid chain: Putative diacyglycerol O-acyltransferase MT3172 (472 aa).

The Proton acceptor role is filled by His139. Positions 217–238 are disordered; that stretch reads DRRVPPTFDRSAPPGPFQRGLS.

The protein belongs to the long-chain O-acyltransferase family.

The enzyme catalyses an acyl-CoA + a 1,2-diacyl-sn-glycerol = a triacyl-sn-glycerol + CoA. It functions in the pathway glycerolipid metabolism; triacylglycerol biosynthesis. The sequence is that of Putative diacyglycerol O-acyltransferase MT3172 from Mycobacterium tuberculosis (strain CDC 1551 / Oshkosh).